The sequence spans 154 residues: Ribonuclease H (154 aa).

The RNase H type-1 domain maps to 1-141 (MKRIEAYTDG…ADELARAGME (141 aa)). Mg(2+)-binding residues include Asp-9, Glu-47, Asp-69, and Asp-133.

The protein belongs to the RNase H family. In terms of assembly, monomer. The cofactor is Mg(2+).

The protein localises to the cytoplasm. It catalyses the reaction Endonucleolytic cleavage to 5'-phosphomonoester.. Its function is as follows. Endonuclease that specifically degrades the RNA of RNA-DNA hybrids. The sequence is that of Ribonuclease H from Brucella abortus (strain 2308).